Consider the following 427-residue polypeptide: MKYFGTDGIRGIFGETLTDELAFKVGKALGEIVGEGRVIVGKDTRVSGDSLEAAISAGLTSMGVDVLLCGIIPTPAVALLTRITRSFGVVISASHNPPEYNGIKVLKGGYKIPDEMEAEIEERLENGSFPPRLVVGRTKSFREGRDMYIGAVLEIFRDLDLTGEMVSLDLANGATTTTAKEVFEFLGAKVEVFNDSQDGLLINQGCGATHPRFLAEEMKNGKVGFTFDGDGDRVIAVDEERNVVNGDRIIGILAVGLKEEGRLNSDTVVGTVMTNGGLEDFLKEKGIKLLRTKVGDKYVLEKMLESGANLGGERSGHIIILDRSTTGDGLITALELMRVLRRSGRNLSDFAKEIPDYPQITKNVRRTERMSLENENLRKIVEESTSRGYRVVIRPSGTEPVIRITVEGKDREEIEKIVEEISRVLES.

The active-site Phosphoserine intermediate is Ser-94. Mg(2+)-binding residues include Ser-94, Asp-228, Asp-230, and Asp-232. Ser-94 is subject to Phosphoserine.

Belongs to the phosphohexose mutase family. Requires Mg(2+) as cofactor. Post-translationally, activated by phosphorylation.

It carries out the reaction alpha-D-glucosamine 1-phosphate = D-glucosamine 6-phosphate. Its function is as follows. Catalyzes the conversion of glucosamine-6-phosphate to glucosamine-1-phosphate. In Thermotoga sp. (strain RQ2), this protein is Phosphoglucosamine mutase.